We begin with the raw amino-acid sequence, 259 residues long: Ribosome maturation factor RimP (259 aa).

The tract at residues 198 to 259 (SLGLAPEPPP…RGEIDTSEGD (62 aa)) is disordered. The span at 243–253 (LAADKARRGEI) shows a compositional bias: basic and acidic residues.

It belongs to the RimP family.

The protein resides in the cytoplasm. Required for maturation of 30S ribosomal subunits. The sequence is that of Ribosome maturation factor RimP from Rhodopseudomonas palustris (strain TIE-1).